The sequence spans 222 residues: Thymidylate kinase (222 aa).

Residues 29–34 (RVGKST) and Arg111 each bind ATP. The LID stretch occupies residues 146-170 (LSMSSEDATKRGEYGGERYEKLEFQ).

Belongs to the thymidylate kinase family. In terms of assembly, homodimer. It depends on Mg(2+) as a cofactor.

The catalysed reaction is dTMP + ATP = dTDP + ADP. The protein operates within pyrimidine metabolism; dTTP biosynthesis. Functionally, catalyzes the phosphorylation of thymidine monophosphate (dTMP) to thymidine diphosphate (dTDP), the immediate precursor for the DNA building block dTTP, with ATP as the preferred phosphoryl donor in the presence of Mg(2+). The chain is Thymidylate kinase (dtymk) from Dictyostelium discoideum (Social amoeba).